The following is a 357-amino-acid chain: Arginine kinase Cal b 2.0101 (357 aa).

The Phosphagen kinase N-terminal domain maps to 9–91 (KLEEGFKKLE…FDPIIEDYHK (83 aa)). 64–68 (GVGVY) is a binding site for L-arginine. The 238-residue stretch at 119-356 (FVISTRVRCG…LELIKIEKEM (238 aa)) folds into the Phosphagen kinase C-terminal domain. ATP-binding positions include 122–126 (STRVR) and His185. Cysteines 201 and 271 form a disulfide. Glu225 is a binding site for L-arginine. Position 229 (Arg229) interacts with ATP. Cys271 is a binding site for L-arginine. Residues 280–284 (RASVH) and 309–314 (RGTRGE) contribute to the ATP site. Glu314 is a binding site for L-arginine.

This sequence belongs to the ATP:guanido phosphotransferase family. In terms of tissue distribution, expressed in chela muscle (at protein level). Expressed in muscle.

The catalysed reaction is L-arginine + ATP = N(omega)-phospho-L-arginine + ADP + H(+). Functionally, catalyzes the reversible transfer of high energy ATP gamma-phosphate group to L-arginine. The chain is Arginine kinase Cal b 2.0101 from Callinectes bellicosus (Warrior swimming crab).